Here is a 729-residue protein sequence, read N- to C-terminus: E3 ubiquitin-protein ligase Trim36 (729 aa).

Residues 33-84 (CPACKELFTHPLILPCQHSVCHKCVKELLLSLDDSFNDVASDSSNQSSPRLR) form an RING-type; degenerate zinc finger. 2 consecutive B box-type zinc fingers follow at residues 154 to 192 (AIMCDLCKPPPQESTKSCMDCSASYCNECFKIYHPWGTV) and 207 to 249 (PKVL…VTTM). Cys212, His215, Cys235, and His241 together coordinate Zn(2+). Residues 271–302 (ESQVKSQISELNLLMKETECNGERAKEEALAH) adopt a coiled-coil conformation. Positions 356-413 (LKETDQSCFVQTAKQLHLRIQKATESLKSFRPAAQASFEDYVVNISKQTEVLGELSFF) constitute a COS domain. Residues 416–511 (GIDIPEINEE…RELILHTPPA (96 aa)) enclose the Fibronectin type-III domain. One can recognise a B30.2/SPRY domain in the interval 509–723 (PPAPVFSFLF…LEEAITAKYL (215 aa)). Positions 606-626 (RDAASPRYEQDSGHDSGSEDA) are disordered. Residues 613 to 622 (YEQDSGHDSG) show a composition bias toward basic and acidic residues.

The protein belongs to the TRIM/RBCC family. In terms of assembly, interacts with CENPH. As to expression, expressed in testis. Strongly expressed in the neural tube region in 14.5 dpc embryos.

It localises to the cytoplasm. The protein localises to the cytoplasmic vesicle. It is found in the secretory vesicle. Its subcellular location is the acrosome. The protein resides in the cytoskeleton. It carries out the reaction S-ubiquitinyl-[E2 ubiquitin-conjugating enzyme]-L-cysteine + [acceptor protein]-L-lysine = [E2 ubiquitin-conjugating enzyme]-L-cysteine + N(6)-ubiquitinyl-[acceptor protein]-L-lysine.. In terms of biological role, E3 ubiquitin-protein ligase which mediates ubiquitination and subsequent proteasomal degradation of target proteins. Involved in chromosome segregation and cell cycle regulation. May play a role in the acrosome reaction and fertilization. The sequence is that of E3 ubiquitin-protein ligase Trim36 (Trim36) from Mus musculus (Mouse).